Here is a 165-residue protein sequence, read N- to C-terminus: Protein SprT (165 aa).

In terms of domain architecture, SprT-like spans 20-163 (EKLAQANLKL…RCVHCGEQLV (144 aa)). Residue histidine 78 participates in Zn(2+) binding. Residue glutamate 79 is part of the active site. Residue histidine 82 participates in Zn(2+) binding.

This sequence belongs to the SprT family. The cofactor is Zn(2+).

It localises to the cytoplasm. This chain is Protein SprT, found in Shigella sonnei (strain Ss046).